The following is a 308-amino-acid chain: MRKLIVGSRRSKLALTQSQQFIDKLKFIDPSLDIEIKEIVTKGDKIVDKQLSKVGGKGLFVKEIQNELFNKEIDMAIHSLKDVPSMIPDGLTLGCIPDREIPFDAYIAKNHIPLQELSEGSIVGTSSLRRGAQILSKYPHLKIKWIRGNIDTRLKKLETEDYDAIILAAAGLKRMGWSDNIVTTYLDRDILLPAIGQGALGIECRSDDKELLDLLSKVHNHDVAQCVTAERTFLSEMDGSCQVPIGGYATIAQDNQIEFTGLIMSPDGKERYEHTALGTDPVKLGIEVSQVLKKQGAYDIIKKLNEAE.

Residue Cys241 is modified to S-(dipyrrolylmethanemethyl)cysteine.

Belongs to the HMBS family. Monomer. Dipyrromethane serves as cofactor.

The catalysed reaction is 4 porphobilinogen + H2O = hydroxymethylbilane + 4 NH4(+). It functions in the pathway porphyrin-containing compound metabolism; protoporphyrin-IX biosynthesis; coproporphyrinogen-III from 5-aminolevulinate: step 2/4. Tetrapolymerization of the monopyrrole PBG into the hydroxymethylbilane pre-uroporphyrinogen in several discrete steps. The protein is Porphobilinogen deaminase of Staphylococcus epidermidis (strain ATCC 35984 / DSM 28319 / BCRC 17069 / CCUG 31568 / BM 3577 / RP62A).